The sequence spans 363 residues: Alanine racemase (363 aa).

Catalysis depends on lysine 34, which acts as the Proton acceptor; specific for D-alanine. Lysine 34 carries the post-translational modification N6-(pyridoxal phosphate)lysine. Substrate is bound at residue arginine 129. Tyrosine 256 (proton acceptor; specific for L-alanine) is an active-site residue. A substrate-binding site is contributed by methionine 304.

It belongs to the alanine racemase family. It depends on pyridoxal 5'-phosphate as a cofactor.

It catalyses the reaction L-alanine = D-alanine. The protein operates within amino-acid biosynthesis; D-alanine biosynthesis; D-alanine from L-alanine: step 1/1. Functionally, catalyzes the interconversion of L-alanine and D-alanine. May also act on other amino acids. In Edwardsiella ictaluri (strain 93-146), this protein is Alanine racemase (alr).